The sequence spans 875 residues: ATP-dependent helicase Lhr-Core (875 aa).

ATP is bound by residues glutamine 35, lysine 58, threonine 59, aspartate 173, glutamate 174, isoleucine 355, arginine 372, and histidine 375. In terms of domain architecture, Helicase ATP-binding spans 39 to 230 (IPLIKQNYNV…FLVGKDREYR (192 aa)). The DEIH box motif lies at 173-176 (DEIH). One can recognise a Helicase C-terminal domain in the interval 247 to 419 (PVKDLVHSSE…SIHIPKNPLD (173 aa)). The WH domain stretch occupies residues 420–506 (VLSQIIVSAS…IFYTNSGTIP (87 aa)). Residues 507–875 (DEAMISVVTE…VNIELEYTSV (369 aa)) are domain 4.

Belongs to the Lhr helicase family. Lhr-Core subfamily. In terms of assembly, monomer and homodimer. The monomeric form has helicase, ATPase and strand annealing activities, while the dimeric form only has ATPAse and strand annealing activities. Interacts with DNA topoisomerase 3 (topA).

The enzyme catalyses Couples ATP hydrolysis with the unwinding of duplex DNA by translocating in the 3'-5' direction.. It carries out the reaction ATP + H2O = ADP + phosphate + H(+). With respect to regulation, DNA topoisomerase 3 (topA) inhibits helicase activity on Holliday junctions (HJ) but has no effect on ATPase activity. In terms of biological role, DNA helicase that translocates in a 3'-5' direction on single-stranded (ss)DNA, probably involved in DNA repair. Unwinds DNA in a 3'-5' direction, unwinding is ATP-dependent, acts preferentially on fork and 3'-tailed DNA; bubble and blunt-ended double-stranded (ds)DNA are not substrates. Has winding and unwinding activity, unwinds Holliday junction (HJ) DNA in the presence of ATP, the main product is forked DNA, single-stranded binding protein (SSB) does not stimulate activity. Anneals complementary oligonucleotides in an ATP-independent manner to form HJ and fork structures, thus can perform strand exchange. Preferentially binds HJ, forked and ssDNA, dsDNA is bound less well. LhrC-Core (Hel112) inhibits the exonuclease activity of the HerA-NurA complex on ss- and dsDNA, has no effect on ssDNA nicking by NurA; HerA-NurA are involved in DNA end-resection during DNA double-strand break repair. The polypeptide is ATP-dependent helicase Lhr-Core (Saccharolobus solfataricus (strain ATCC 35092 / DSM 1617 / JCM 11322 / P2) (Sulfolobus solfataricus)).